The chain runs to 157 residues: Endoribonuclease YbeY (157 aa).

The Zn(2+) site is built by His-114, His-118, and His-124.

It belongs to the endoribonuclease YbeY family. It depends on Zn(2+) as a cofactor.

Its subcellular location is the cytoplasm. In terms of biological role, single strand-specific metallo-endoribonuclease involved in late-stage 70S ribosome quality control and in maturation of the 3' terminus of the 16S rRNA. In Salmonella paratyphi A (strain AKU_12601), this protein is Endoribonuclease YbeY.